A 433-amino-acid chain; its full sequence is GTPase Der (433 aa).

2 consecutive EngA-type G domains span residues 3–167 and 175–347; these read NRVV…KEEK and IKVA…KDYT. GTP-binding positions include 9–16, 56–60, 119–122, 181–188, 228–232, and 293–296; these read GRPNVGKS, DTGGL, NKID, DTAGV, and NKMD. The 85-residue stretch at 348-432 folds into the KH-like domain; sequence KQHKTSFVNR…PIKLVIKGRE (85 aa).

This sequence belongs to the TRAFAC class TrmE-Era-EngA-EngB-Septin-like GTPase superfamily. EngA (Der) GTPase family. As to quaternary structure, associates with the 50S ribosomal subunit.

Its function is as follows. GTPase that plays an essential role in the late steps of ribosome biogenesis. This is GTPase Der from Aquifex aeolicus (strain VF5).